The primary structure comprises 298 residues: Acetylglutamate kinase (298 aa).

Residues 69–70, arginine 91, and asparagine 196 contribute to the substrate site; that span reads GG.

The protein belongs to the acetylglutamate kinase family. ArgB subfamily.

It localises to the cytoplasm. It carries out the reaction N-acetyl-L-glutamate + ATP = N-acetyl-L-glutamyl 5-phosphate + ADP. It participates in amino-acid biosynthesis; L-arginine biosynthesis; N(2)-acetyl-L-ornithine from L-glutamate: step 2/4. Functionally, catalyzes the ATP-dependent phosphorylation of N-acetyl-L-glutamate. The sequence is that of Acetylglutamate kinase from Rhodopseudomonas palustris (strain BisB18).